A 369-amino-acid chain; its full sequence is MHKNENNRLLGSVSLPDDPDRSLRPQVLDDFIGQEAARANLKIFIEAAKTRHEALDHVLFVGPPGLGKTTLSQIMAKELGVNFRSTSGPVIAKAGDLAALLTNLEERDVLFIDEIHRLNPAIEEILYPAMEDYQLDLIIGEGPAARSVKIDLAKFTLVAATTRLGLLTTPLRDRFGIPIRLNFYTIEELEYIVKRNARLFSVPISDDGAHEIARRARGTPRIAGRLLRRVCDFALVKQAKTIDREIADTALSRLEVDHLGLDPLDRNYLMLIADVFLGGPVGIETIAAALSEPRDAIEDIIEPYLLQQGFIQRTPRGRIITEKAWAHLGLRAPTQPAASATLSTPDLSTSSDVPVSSLIQKHLWEKDYD.

The tract at residues 1-21 (MHKNENNRLLGSVSLPDDPDR) is disordered. A large ATPase domain (RuvB-L) region spans residues 1–184 (MHKNENNRLL…FGIPIRLNFY (184 aa)). Residues Leu-23, Arg-24, Gly-65, Lys-68, Thr-69, Thr-70, 131-133 (EDY), Arg-174, Tyr-184, and Arg-221 contribute to the ATP site. Thr-69 lines the Mg(2+) pocket. A small ATPAse domain (RuvB-S) region spans residues 185–255 (TIEELEYIVK…IADTALSRLE (71 aa)). Residues 258–369 (HLGLDPLDRN…QKHLWEKDYD (112 aa)) form a head domain (RuvB-H) region. Residues Arg-294, Arg-313, and Arg-318 each contribute to the DNA site.

Belongs to the RuvB family. Homohexamer. Forms an RuvA(8)-RuvB(12)-Holliday junction (HJ) complex. HJ DNA is sandwiched between 2 RuvA tetramers; dsDNA enters through RuvA and exits via RuvB. An RuvB hexamer assembles on each DNA strand where it exits the tetramer. Each RuvB hexamer is contacted by two RuvA subunits (via domain III) on 2 adjacent RuvB subunits; this complex drives branch migration. In the full resolvosome a probable DNA-RuvA(4)-RuvB(12)-RuvC(2) complex forms which resolves the HJ.

Its subcellular location is the cytoplasm. The enzyme catalyses ATP + H2O = ADP + phosphate + H(+). In terms of biological role, the RuvA-RuvB-RuvC complex processes Holliday junction (HJ) DNA during genetic recombination and DNA repair, while the RuvA-RuvB complex plays an important role in the rescue of blocked DNA replication forks via replication fork reversal (RFR). RuvA specifically binds to HJ cruciform DNA, conferring on it an open structure. The RuvB hexamer acts as an ATP-dependent pump, pulling dsDNA into and through the RuvAB complex. RuvB forms 2 homohexamers on either side of HJ DNA bound by 1 or 2 RuvA tetramers; 4 subunits per hexamer contact DNA at a time. Coordinated motions by a converter formed by DNA-disengaged RuvB subunits stimulates ATP hydrolysis and nucleotide exchange. Immobilization of the converter enables RuvB to convert the ATP-contained energy into a lever motion, pulling 2 nucleotides of DNA out of the RuvA tetramer per ATP hydrolyzed, thus driving DNA branch migration. The RuvB motors rotate together with the DNA substrate, which together with the progressing nucleotide cycle form the mechanistic basis for DNA recombination by continuous HJ branch migration. Branch migration allows RuvC to scan DNA until it finds its consensus sequence, where it cleaves and resolves cruciform DNA. In Bartonella bacilliformis (strain ATCC 35685 / KC583 / Herrer 020/F12,63), this protein is Holliday junction branch migration complex subunit RuvB.